Consider the following 179-residue polypeptide: Protein GrpE (179 aa).

A disordered region spans residues 1–45; that stretch reads MSEEKLTQDPTAEEEQTETADQQESADVNWEQEAAHWKAQAEEHQ. Residues 33-45 show a composition bias toward basic and acidic residues; sequence EAAHWKAQAEEHQ.

It belongs to the GrpE family. As to quaternary structure, homodimer.

Its subcellular location is the cytoplasm. Functionally, participates actively in the response to hyperosmotic and heat shock by preventing the aggregation of stress-denatured proteins, in association with DnaK and GrpE. It is the nucleotide exchange factor for DnaK and may function as a thermosensor. Unfolded proteins bind initially to DnaJ; upon interaction with the DnaJ-bound protein, DnaK hydrolyzes its bound ATP, resulting in the formation of a stable complex. GrpE releases ADP from DnaK; ATP binding to DnaK triggers the release of the substrate protein, thus completing the reaction cycle. Several rounds of ATP-dependent interactions between DnaJ, DnaK and GrpE are required for fully efficient folding. The chain is Protein GrpE from Brevibacillus choshinensis.